A 66-amino-acid chain; its full sequence is Protein translocase subunit SecE (66 aa).

Residues 29-49 (LVASTLVVVVAVFIFSLTCLV) form a helical membrane-spanning segment.

It belongs to the SecE/SEC61-gamma family. In terms of assembly, component of the Sec protein translocase complex. Heterotrimer consisting of SecY, SecE and SecG subunits. The heterotrimers can form oligomers, although 1 heterotrimer is thought to be able to translocate proteins. Interacts with the ribosome. Interacts with SecDF, and other proteins may be involved. Interacts with SecA.

The protein resides in the cell inner membrane. In terms of biological role, essential subunit of the Sec protein translocation channel SecYEG. Clamps together the 2 halves of SecY. May contact the channel plug during translocation. The polypeptide is Protein translocase subunit SecE (Rickettsia rickettsii).